The sequence spans 59 residues: Protein translocase subunit SecE (59 aa).

The helical transmembrane segment at 35–55 (IVAIGIAIIGVVGFIIVLIGE) threads the bilayer.

This sequence belongs to the SecE/SEC61-gamma family. Component of the Sec protein translocase complex. Heterotrimer consisting of SecY (alpha), SecG (beta) and SecE (gamma) subunits. The heterotrimers can form oligomers, although 1 heterotrimer is thought to be able to translocate proteins. Interacts with the ribosome. May interact with SecDF, and other proteins may be involved.

Its subcellular location is the cell membrane. In terms of biological role, essential subunit of the Sec protein translocation channel SecYEG. Clamps together the 2 halves of SecY. May contact the channel plug during translocation. The sequence is that of Protein translocase subunit SecE from Methanobrevibacter smithii (strain ATCC 35061 / DSM 861 / OCM 144 / PS).